The sequence spans 310 residues: 2-dehydro-3-deoxygluconokinase (310 aa).

Substrate contacts are provided by residues 29 to 33 (GDTLN), Tyr-89, 103 to 105 (YWR), and Arg-171. ATP-binding positions include 169-171 (NYR), 229-234 (KRGADA), and 262-265 (AAGD). Asp-265 contacts substrate. Residue Asp-265 is the Proton acceptor of the active site.

This sequence belongs to the carbohydrate kinase PfkB family.

It carries out the reaction 2-dehydro-3-deoxy-D-gluconate + ATP = 2-dehydro-3-deoxy-6-phospho-D-gluconate + ADP + H(+). It functions in the pathway carbohydrate acid metabolism; 2-dehydro-3-deoxy-D-gluconate degradation; D-glyceraldehyde 3-phosphate and pyruvate from 2-dehydro-3-deoxy-D-gluconate: step 1/2. Catalyzes the phosphorylation of 2-keto-3-deoxygluconate (KDG) to produce 2-keto-3-deoxy-6-phosphogluconate (KDPG). This chain is 2-dehydro-3-deoxygluconokinase, found in Dickeya dadantii (strain 3937) (Erwinia chrysanthemi (strain 3937)).